The chain runs to 443 residues: Probable cytosolic iron-sulfur protein assembly protein 1 (443 aa).

2 disordered regions span residues 1-27 and 95-124; these read MSDPRPNTLSPLATLTPPSSSRTWQTA and REEQGGNEDDFTNRRVGGAEDEDGRDDDDE. Positions 8 to 21 are enriched in low complexity; that stretch reads TLSPLATLTPPSSS. WD repeat units follow at residues 14-57 and 61-103; these read TLTP…LLHS and GHKR…GNED. Residues 113–124 show a composition bias toward acidic residues; sequence AEDEDGRDDDDE. 6 WD repeats span residues 135-174, 180-219, 221-248, 255-294, 323-362, and 391-440; these read GHESEIKSLSWSPTGQYLATCSRDKSVWIWEELEDDNFET, EHDGDVKCVAWHPEEDLLASASYDDSVRLYREDSDDWVQV, CIAGKEGHGMTVWWVEFEGSGISGKDFR, SEEQTQHVDSMERSGPRLATCSDDRTVRIWRRKPRERAEN, VHERAIYSVSWSRTTGLIASAGSDGKIIIYKERWRKQTPN, and AHSV…DPPQ.

The protein belongs to the WD repeat CIA1 family.

Its function is as follows. Essential component of the cytosolic iron-sulfur (Fe/S) protein assembly machinery. Required for the maturation of extramitochondrial Fe/S proteins. This chain is Probable cytosolic iron-sulfur protein assembly protein 1, found in Phaeosphaeria nodorum (strain SN15 / ATCC MYA-4574 / FGSC 10173) (Glume blotch fungus).